Here is a 258-residue protein sequence, read N- to C-terminus: Indole-3-glycerol phosphate synthase 2 (258 aa).

It belongs to the TrpC family.

It catalyses the reaction 1-(2-carboxyphenylamino)-1-deoxy-D-ribulose 5-phosphate + H(+) = (1S,2R)-1-C-(indol-3-yl)glycerol 3-phosphate + CO2 + H2O. It participates in amino-acid biosynthesis; L-tryptophan biosynthesis; L-tryptophan from chorismate: step 4/5. The function of the second trp operon in S.coelicolor is to produce tryptophan for the biosynthesis of calcium-dependent antibiotic (CDA). The protein is Indole-3-glycerol phosphate synthase 2 (trpC2) of Streptomyces coelicolor (strain ATCC BAA-471 / A3(2) / M145).